The chain runs to 400 residues: Forkhead box protein A4-B (400 aa).

The segment at residues 119–213 (KPPYSYISLI…ENGCYLRRQK (95 aa)) is a DNA-binding region (fork-head). Residues 218–234 (ERSKSGEGERKGNKPGD) show a composition bias toward basic and acidic residues. The segment at 218-290 (ERSKSGEGER…VGFSPTSEQA (73 aa)) is disordered. Polar residues-rich tracts occupy residues 249-258 (DCSSSRSPQA) and 267-277 (STGSSIHQATG).

As to expression, primarily expressed in the dorsal blastopore lip (Spemann organizer) of early gastrulae. At later stages, expressed in the dorsal mesoderm and the neural floor plate. In the dorsal mesoderm, expressed in the notochord but not in the presomitic mesoderm. Also expressed in the mid-brain area.

It localises to the nucleus. Transcriptional repressor involved in embryonic nervous system development. Plays a role in the induction and patterning of the anterior-posterior neural axis. Involved in the establishment of floor plate differentiation from neural plate cells during gastrulation. Binds the anf1 promoter sequence to restrict expression of anf1 to the anterior of the neural plate, thereby patterning the forebrain. Can bind to the HNF-3-alpha DNA target sequence. Cooperates with t/bra in a dose-dependent manner to specify dorsal mesoderm formation, including notochord. May be involved in the dorso-ventral patterning of the mesoderm. Binds to DNA via the target sequence 5'-[GA]TAAA[TC]A-3', with 5'-GTAAATA-3' being the preferred binding site. In Xenopus laevis (African clawed frog), this protein is Forkhead box protein A4-B (foxa4-b).